A 468-amino-acid chain; its full sequence is Elongation factor 1-alpha (468 aa).

One can recognise a tr-type G domain in the interval 6–244; sequence KPHINIVVIG…DNIPLPARPS (239 aa). The tract at residues 15–22 is G1; sequence GHVDSGKS. 15 to 22 is a GTP binding site; the sequence is GHVDSGKS. Positions 71-75 are G2; the sequence is GITID. A G3 region spans residues 92 to 95; it reads DAPG. GTP is bound by residues 92 to 96 and 154 to 157; these read DAPGH and NKID. The segment at 154-157 is G4; that stretch reads NKID. Residues 195-197 are G5; sequence SGW. Glu-303 and Glu-376 each carry 5-glutamyl glycerylphosphorylethanolamine.

Belongs to the TRAFAC class translation factor GTPase superfamily. Classic translation factor GTPase family. EF-Tu/EF-1A subfamily.

It is found in the cytoplasm. In terms of biological role, this protein promotes the GTP-dependent binding of aminoacyl-tRNA to the A-site of ribosomes during protein biosynthesis. This Hydra vulgaris (Hydra) protein is Elongation factor 1-alpha.